The following is a 225-amino-acid chain: LHFPL tetraspan subfamily member 2a protein (225 aa).

4 helical membrane-spanning segments follow: residues 11–31, 99–119, 129–149, and 178–198; these read MLWT…FLST, IFLA…IFTM, IFNV…VGLV, and AGWA…CAVF.

It belongs to the LHFP family.

Its subcellular location is the membrane. Plays a role in fertility. Involved in distal reproductive tract development. The chain is LHFPL tetraspan subfamily member 2a protein from Danio rerio (Zebrafish).